Here is a 66-residue protein sequence, read N- to C-terminus: Large ribosomal subunit protein uL29 (66 aa).

The protein belongs to the universal ribosomal protein uL29 family.

The protein is Large ribosomal subunit protein uL29 of Allorhizobium ampelinum (strain ATCC BAA-846 / DSM 112012 / S4) (Agrobacterium vitis (strain S4)).